Reading from the N-terminus, the 627-residue chain is Protein CER1-like 1 (627 aa).

The next 5 membrane-spanning stretches (helical) occupy residues 19-39 (FKYLLVAPLVMASMHSYVTAV), 48-68 (LMIVVLMLWRIVHSQIWISVS), 126-146 (GAILMALLHAGPVEFLYYWFH), 186-206 (LLFAIPMVTASLCGILSIVSI), and 328-348 (YLTCFMWPFTLLCSFALTSAI). The Fatty acid hydroxylase domain occupies 138-272 (VEFLYYWFHR…MPIYDFIYGT (135 aa)).

Belongs to the sterol desaturase family. Expressed in flowers and siliques. Not detected in pollen, pedicels and seeds.

Its subcellular location is the membrane. The protein is Protein CER1-like 1 of Arabidopsis thaliana (Mouse-ear cress).